The sequence spans 787 residues: uncharacterized protein (787 aa).

Positions 1-22 (MKFKYCAIFFSGFLGLSAILAA) are cleaved as a signal peptide. C23 is lipidated: N-palmitoyl cysteine. Residue C23 is the site of S-diacylglycerol cysteine attachment. 2 disordered regions span residues 178-270 (SDNV…DNKI) and 473-495 (KSKEVKKTNRKEDGAQNQGKKES). Residues 181-208 (VKVSQRTGETTQKSKVTNPLKINTQNDP) are compositionally biased toward polar residues. Over residues 209–219 (ATKDLWEKIEA) the composition is skewed to basic and acidic residues. A compositionally biased stretch (low complexity) spans 242 to 261 (SSSSSLVNLKQSTDQTTTDD).

It belongs to the MG185/MG260 family.

The protein localises to the cell membrane. This is an uncharacterized protein from Mycoplasma pneumoniae (strain ATCC 29342 / M129 / Subtype 1) (Mycoplasmoides pneumoniae).